The following is a 158-amino-acid chain: U4/U6.U5 small nuclear ribonucleoprotein 27 kDa protein (158 aa).

The segment covering 1 to 30 (MGRSRSRTPPRRERRRSRSSSRDRERRRRE) has biased composition (basic residues). The tract at residues 1-100 (MGRSRSRTPP…ISAEDMQGKT (100 aa)) is disordered. Residues 31–41 (RERSRSRDRDR) show a composition bias toward basic and acidic residues. A compositionally biased stretch (basic residues) spans 42–62 (RRSRSRSPHRRRSRSPRRHRS). Residues 69 to 86 (RQKDRRDDDRKDVKEKPA) are compositionally biased toward basic and acidic residues.

This sequence belongs to the SNUT3 family. Part of a tri-snRNP complex.

The protein localises to the nucleus. In terms of biological role, may play a role in mRNA splicing. This Danio rerio (Zebrafish) protein is U4/U6.U5 small nuclear ribonucleoprotein 27 kDa protein (snrnp27).